The chain runs to 209 residues: MKDCENHGHSRRKLIRRIFWSIIFVLFIIFLTILLIWAILQPSKPRFILQDATVYAFNVSGNPPNLLTSNFQITLSSRNPNNKIGIYYDRLDVYATYRSQQITFPTSIPPTYQGHKDVDIWSPFVYGTSVPIAPFNGVSLDTDKDNGVVLLIIRADGRVRWKVGTFITGKYHLHVKCPAYINFGNKANGVIVGDNAVKYTFTTSCSVSV.

A helical membrane pass occupies residues 18–38 (IFWSIIFVLFIIFLTILLIWA). Asparagine 58 carries an N-linked (GlcNAc...) asparagine glycan.

As to expression, expressed in rosette leaves, cauline leaves, stems, and siliques, and at lower levels in roots and flowers.

The protein localises to the cell membrane. Functionally, may play a role in plant immunity. This is NDR1/HIN1-like protein 1 from Arabidopsis thaliana (Mouse-ear cress).